A 724-amino-acid chain; its full sequence is Phosphoribosylformylglycinamidine synthase subunit PurL (724 aa).

His34 is an active-site residue. ATP is bound at residue Tyr37. Glu78 lines the Mg(2+) pocket. Substrate is bound by residues 79–82 and Arg101; that span reads SHNH. His80 functions as the Proton acceptor in the catalytic mechanism. Asp102 lines the Mg(2+) pocket. Gln226 is a substrate binding site. Asp254 contacts Mg(2+). 298–300 lines the substrate pocket; the sequence is ESQ. Residues Asp480 and Gly517 each coordinate ATP. Asn518 serves as a coordination point for Mg(2+). Residue Ser520 coordinates substrate.

This sequence belongs to the FGAMS family. As to quaternary structure, monomer. Part of the FGAM synthase complex composed of 1 PurL, 1 PurQ and 2 PurS subunits.

The protein resides in the cytoplasm. It carries out the reaction N(2)-formyl-N(1)-(5-phospho-beta-D-ribosyl)glycinamide + L-glutamine + ATP + H2O = 2-formamido-N(1)-(5-O-phospho-beta-D-ribosyl)acetamidine + L-glutamate + ADP + phosphate + H(+). It functions in the pathway purine metabolism; IMP biosynthesis via de novo pathway; 5-amino-1-(5-phospho-D-ribosyl)imidazole from N(2)-formyl-N(1)-(5-phospho-D-ribosyl)glycinamide: step 1/2. Its function is as follows. Part of the phosphoribosylformylglycinamidine synthase complex involved in the purines biosynthetic pathway. Catalyzes the ATP-dependent conversion of formylglycinamide ribonucleotide (FGAR) and glutamine to yield formylglycinamidine ribonucleotide (FGAM) and glutamate. The FGAM synthase complex is composed of three subunits. PurQ produces an ammonia molecule by converting glutamine to glutamate. PurL transfers the ammonia molecule to FGAR to form FGAM in an ATP-dependent manner. PurS interacts with PurQ and PurL and is thought to assist in the transfer of the ammonia molecule from PurQ to PurL. In Methanopyrus kandleri (strain AV19 / DSM 6324 / JCM 9639 / NBRC 100938), this protein is Phosphoribosylformylglycinamidine synthase subunit PurL.